Reading from the N-terminus, the 578-residue chain is Probable arginine--tRNA ligase, mitochondrial (578 aa).

A mitochondrion-targeting transit peptide spans Met-1–Val-16. L-arginine is bound by residues Ser-133–Asn-135, His-144, Tyr-322, Asp-326, and Gln-350. Positions Ser-133–His-144 match the 'HIGH' region motif. Position 568 is an N6-acetyllysine (Lys-568).

Belongs to the class-I aminoacyl-tRNA synthetase family.

It is found in the mitochondrion membrane. It carries out the reaction tRNA(Arg) + L-arginine + ATP = L-arginyl-tRNA(Arg) + AMP + diphosphate. Its function is as follows. Catalyzes the attachment of arginine to tRNA(Arg) in a two-step reaction: arginine is first activated by ATP to form Arg-AMP and then transferred to the acceptor end of tRNA(Arg). In Mus musculus (Mouse), this protein is Probable arginine--tRNA ligase, mitochondrial (Rars2).